Here is a 358-residue protein sequence, read N- to C-terminus: Ion-translocating oxidoreductase complex subunit D (358 aa).

Transmembrane regions (helical) follow at residues 24–44, 79–99, and 125–145; these read ILAMMPAFFTQIYYFGFGVVL, LTALILAMAIPPYAPYWIIII, and IGYVILLISFPLQMTTWMPPI. Thr-186 carries the post-translational modification FMN phosphoryl threonine. The next 5 membrane-spanning stretches (helical) occupy residues 220–240, 248–268, 271–291, 297–317, and 321–341; these read FAQGWWQINVAFLAGGIFLIL, IPVAMLVTFFCLATATAFTGF, LSAISQLVSGAMMFGAFFIAT, SITPRGKIIFGALVGLFVYLI, and GNYPDGVAFAILLSNICVPLI.

This sequence belongs to the NqrB/RnfD family. As to quaternary structure, the complex is composed of six subunits: RnfA, RnfB, RnfC, RnfD, RnfE and RnfG. Requires FMN as cofactor.

It is found in the cell inner membrane. Functionally, part of a membrane-bound complex that couples electron transfer with translocation of ions across the membrane. The chain is Ion-translocating oxidoreductase complex subunit D from Haemophilus influenzae (strain ATCC 51907 / DSM 11121 / KW20 / Rd).